The primary structure comprises 532 residues: Membrane protein insertase YidC (532 aa).

Transmembrane regions (helical) follow at residues 7–27 (FFIF…QSQM), 336–356 (LTIL…ITFI), 413–433 (GGFL…YMLI), 450–470 (LSSQ…MFFI), and 492–512 (PVIF…YYII).

This sequence belongs to the OXA1/ALB3/YidC family. Type 1 subfamily. In terms of assembly, interacts with the Sec translocase complex via SecD. Specifically interacts with transmembrane segments of nascent integral membrane proteins during membrane integration.

The protein localises to the cell membrane. Required for the insertion and/or proper folding and/or complex formation of integral membrane proteins into the membrane. Involved in integration of membrane proteins that insert both dependently and independently of the Sec translocase complex, as well as at least some lipoproteins. Aids folding of multispanning membrane proteins. This Buchnera aphidicola subsp. Acyrthosiphon pisum (strain APS) (Acyrthosiphon pisum symbiotic bacterium) protein is Membrane protein insertase YidC.